We begin with the raw amino-acid sequence, 147 residues long: UPF0047 protein sll1880 (147 aa).

The protein belongs to the UPF0047 family.

This Synechocystis sp. (strain ATCC 27184 / PCC 6803 / Kazusa) protein is UPF0047 protein sll1880.